The primary structure comprises 247 residues: Protein NipSnap homolog 3A (247 aa).

2 positions are modified to N6-acetyllysine: Lys48 and Lys166.

Belongs to the NipSnap family. Interacts with the Salmonella typhimurium virulence protein spiC. As to expression, ubiquitous. Highly expressed in liver, kidney and muscle. Expressed at intermediate level in brain, heart, colon, thymus, kidney, small intestine, placenta, lung, leukocytes and spleen.

It is found in the cytoplasm. It localises to the cytosol. The protein is Protein NipSnap homolog 3A (NIPSNAP3A) of Homo sapiens (Human).